A 686-amino-acid polypeptide reads, in one-letter code: Glycine--tRNA ligase beta subunit (686 aa).

This sequence belongs to the class-II aminoacyl-tRNA synthetase family. In terms of assembly, tetramer of two alpha and two beta subunits.

It localises to the cytoplasm. It carries out the reaction tRNA(Gly) + glycine + ATP = glycyl-tRNA(Gly) + AMP + diphosphate. This chain is Glycine--tRNA ligase beta subunit, found in Geobacter metallireducens (strain ATCC 53774 / DSM 7210 / GS-15).